A 315-amino-acid polypeptide reads, in one-letter code: Probable cytochrome c oxidase subunit 2 (315 aa).

The next 3 membrane-spanning stretches (helical) occupy residues Ile54 to Trp74, Leu96 to Ile116, and Val133 to Pro153. Residues His235, Cys270, Cys274, and His278 each coordinate Cu cation.

The protein belongs to the cytochrome c oxidase subunit 2 family. Cu cation serves as cofactor. Heme is required as a cofactor.

The protein localises to the cell membrane. It catalyses the reaction 4 Fe(II)-[cytochrome c] + O2 + 8 H(+)(in) = 4 Fe(III)-[cytochrome c] + 2 H2O + 4 H(+)(out). Subunits I and II form the functional core of the enzyme complex. Electrons originating in cytochrome c are transferred via heme a and Cu(A) to the binuclear center formed by heme a3 and Cu(B). The polypeptide is Probable cytochrome c oxidase subunit 2 (ctaC) (Rickettsia conorii (strain ATCC VR-613 / Malish 7)).